We begin with the raw amino-acid sequence, 332 residues long: Biotin synthase (332 aa).

The Radical SAM core domain occupies 53-282 (HFGKKVKLNM…TKEIRISGGR (230 aa)). [4Fe-4S] cluster contacts are provided by cysteine 71, cysteine 75, and cysteine 78. Residues cysteine 115, cysteine 147, cysteine 207, and arginine 277 each contribute to the [2Fe-2S] cluster site.

It belongs to the radical SAM superfamily. Biotin synthase family. As to quaternary structure, homodimer. It depends on [4Fe-4S] cluster as a cofactor. [2Fe-2S] cluster serves as cofactor.

It catalyses the reaction (4R,5S)-dethiobiotin + (sulfur carrier)-SH + 2 reduced [2Fe-2S]-[ferredoxin] + 2 S-adenosyl-L-methionine = (sulfur carrier)-H + biotin + 2 5'-deoxyadenosine + 2 L-methionine + 2 oxidized [2Fe-2S]-[ferredoxin]. It functions in the pathway cofactor biosynthesis; biotin biosynthesis; biotin from 7,8-diaminononanoate: step 2/2. Catalyzes the conversion of dethiobiotin (DTB) to biotin by the insertion of a sulfur atom into dethiobiotin via a radical-based mechanism. This chain is Biotin synthase, found in Bacillus mycoides (strain KBAB4) (Bacillus weihenstephanensis).